Consider the following 460-residue polypeptide: Elongation factor 1-alpha (460 aa).

Gly2 is modified (n,N,N-trimethylglycine). An N6,N6-dimethyllysine; alternate modification is found at Lys3. Position 3 is an N6-methyllysine; alternate (Lys3). The tr-type G domain occupies 6-241 (KTHINVVVIG…DSIEPPKRPT (236 aa)). The segment at 15-22 (GHVDSGKS) is G1. A GTP-binding site is contributed by 15–22 (GHVDSGKS). Positions 71–75 (GITID) are G2. N6,N6,N6-trimethyllysine is present on Lys80. A G3 region spans residues 92–95 (DAPG). GTP contacts are provided by residues 92 to 96 (DAPGH) and 154 to 157 (NKMD). The interval 154–157 (NKMD) is G4. The tract at residues 193-195 (SGF) is G5. N6,N6-dimethyllysine; alternate is present on Lys317. Lys317 carries the post-translational modification N6-methyllysine; alternate. Residue Lys391 is modified to N6-methyllysine.

The protein belongs to the TRAFAC class translation factor GTPase superfamily. Classic translation factor GTPase family. EF-Tu/EF-1A subfamily.

It is found in the cytoplasm. Functionally, this protein promotes the GTP-dependent binding of aminoacyl-tRNA to the A-site of ribosomes during protein biosynthesis. This Hypocrea jecorina (Trichoderma reesei) protein is Elongation factor 1-alpha (tef1).